The following is a 191-amino-acid chain: Potassium-transporting ATPase KdpC subunit (191 aa).

A helical membrane pass occupies residues 13–35 (VLFTGLCGLAYPLAITGVAQAVL). The disordered stretch occupies residues 112–132 (SGPVPADAVTSSASGLDPDIS).

The protein belongs to the KdpC family. As to quaternary structure, the system is composed of three essential subunits: KdpA, KdpB and KdpC.

Its subcellular location is the cell inner membrane. Its function is as follows. Part of the high-affinity ATP-driven potassium transport (or Kdp) system, which catalyzes the hydrolysis of ATP coupled with the electrogenic transport of potassium into the cytoplasm. This subunit acts as a catalytic chaperone that increases the ATP-binding affinity of the ATP-hydrolyzing subunit KdpB by the formation of a transient KdpB/KdpC/ATP ternary complex. The chain is Potassium-transporting ATPase KdpC subunit from Allorhizobium ampelinum (strain ATCC BAA-846 / DSM 112012 / S4) (Agrobacterium vitis (strain S4)).